The primary structure comprises 62 residues: UPF0434 protein azo1471 (62 aa).

The protein belongs to the UPF0434 family.

This Azoarcus sp. (strain BH72) protein is UPF0434 protein azo1471.